Consider the following 136-residue polypeptide: Psoriasis susceptibility 1 candidate gene 2 protein homolog (136 aa).

The N-terminal stretch at 1–22 (MILNWKLLGILVLCLHTRGISG) is a signal peptide. The tract at residues 20-136 (ISGSEDHPSH…DLDPPREEYR (117 aa)) is disordered. Residues 23–33 (SEDHPSHPPAE) show a composition bias toward basic and acidic residues. Composition is skewed to pro residues over residues 44–74 (PQGPPVPGDPWPGAPPLFEDPPPPHPSPPWR) and 83–116 (PPEPPRTDPPQPPRPDDPWPAGPQPPENPWPPAP). Basic and acidic residues predominate over residues 117 to 136 (EVDHRPQEEPDLDPPREEYR).

Its subcellular location is the secreted. This Pan troglodytes (Chimpanzee) protein is Psoriasis susceptibility 1 candidate gene 2 protein homolog (PSORS1C2).